A 137-amino-acid polypeptide reads, in one-letter code: Fluoride-specific ion channel FluC 2 (137 aa).

The next 4 membrane-spanning stretches (helical) occupy residues 3–23 (MGGSFVVLSGVIAIVVGSVLG), 44–64 (WGTMTINVTGAFLIGIFGALA), 76–96 (PWLFAVTGFLGCYTTVSSFSL), and 111–131 (LGNVAFSVGLCLAAVSCGFLL). Na(+)-binding residues include glycine 86 and threonine 89.

It belongs to the fluoride channel Fluc/FEX (TC 1.A.43) family.

Its subcellular location is the cell inner membrane. It carries out the reaction fluoride(in) = fluoride(out). With respect to regulation, na(+) is not transported, but it plays an essential structural role and its presence is essential for fluoride channel function. Functionally, fluoride-specific ion channel. Important for reducing fluoride concentration in the cell, thus reducing its toxicity. The polypeptide is Fluoride-specific ion channel FluC 2 (Bradyrhizobium diazoefficiens (strain JCM 10833 / BCRC 13528 / IAM 13628 / NBRC 14792 / USDA 110)).